The sequence spans 205 residues: Phosphoheptose isomerase (205 aa).

The region spanning 38-200 is the SIS domain; it reads LAVRLALGSK…LFEAVGELEP (163 aa). 53 to 55 contacts substrate; the sequence is NGG. Zn(2+)-binding residues include His62 and Glu66. Substrate is bound by residues Glu66, 95-96, 121-123, Ser126, and Gln173; these read ND and STS. Residues Gln173 and His181 each contribute to the Zn(2+) site.

It belongs to the SIS family. GmhA subfamily. Homotetramer. Zn(2+) is required as a cofactor.

The protein localises to the cytoplasm. It catalyses the reaction 2 D-sedoheptulose 7-phosphate = D-glycero-alpha-D-manno-heptose 7-phosphate + D-glycero-beta-D-manno-heptose 7-phosphate. It participates in carbohydrate biosynthesis; D-glycero-D-manno-heptose 7-phosphate biosynthesis; D-glycero-alpha-D-manno-heptose 7-phosphate and D-glycero-beta-D-manno-heptose 7-phosphate from sedoheptulose 7-phosphate: step 1/1. Its function is as follows. Catalyzes the isomerization of sedoheptulose 7-phosphate in D-glycero-D-manno-heptose 7-phosphate. This is Phosphoheptose isomerase from Maridesulfovibrio salexigens (strain ATCC 14822 / DSM 2638 / NCIMB 8403 / VKM B-1763) (Desulfovibrio salexigens).